The sequence spans 86 residues: MITITIVYFTNKIQHVKKIKLNIGTPVHEALKILQINIKKNNKIGIYGELVSLNHILNNKDRLEIYRPLKINPRELRKQKINRKLK.

The protein belongs to the UPF0125 (RnfH) family.

The chain is UPF0125 protein bbp_234 from Buchnera aphidicola subsp. Baizongia pistaciae (strain Bp).